A 163-amino-acid polypeptide reads, in one-letter code: Nucleotide-binding protein APJL_1242 (163 aa).

Belongs to the YajQ family.

In terms of biological role, nucleotide-binding protein. This is Nucleotide-binding protein APJL_1242 from Actinobacillus pleuropneumoniae serotype 3 (strain JL03).